A 151-amino-acid polypeptide reads, in one-letter code: ATP synthase subunit b' (151 aa).

A helical membrane pass occupies residues 18 to 38 (TLPLMALQVVLLTFILNALFF).

Belongs to the ATPase B chain family. As to quaternary structure, F-type ATPases have 2 components, F(1) - the catalytic core - and F(0) - the membrane proton channel. F(1) has five subunits: alpha(3), beta(3), gamma(1), delta(1), epsilon(1). F(0) has four main subunits: a(1), b(1), b'(1) and c(10-14). The alpha and beta chains form an alternating ring which encloses part of the gamma chain. F(1) is attached to F(0) by a central stalk formed by the gamma and epsilon chains, while a peripheral stalk is formed by the delta, b and b' chains.

The protein localises to the cellular thylakoid membrane. F(1)F(0) ATP synthase produces ATP from ADP in the presence of a proton or sodium gradient. F-type ATPases consist of two structural domains, F(1) containing the extramembraneous catalytic core and F(0) containing the membrane proton channel, linked together by a central stalk and a peripheral stalk. During catalysis, ATP synthesis in the catalytic domain of F(1) is coupled via a rotary mechanism of the central stalk subunits to proton translocation. In terms of biological role, component of the F(0) channel, it forms part of the peripheral stalk, linking F(1) to F(0). The b'-subunit is a diverged and duplicated form of b found in plants and photosynthetic bacteria. The chain is ATP synthase subunit b' from Prochlorococcus marinus (strain MIT 9313).